The sequence spans 1070 residues: MIRDGNEGMYTIPGFNQIQFEGFCRFINQGLMEELHKFPKIEDTDQEIEFQLFVETYQLVEPLIKERDAVYESLTYSSELYVPAGLIWKTSRAMQEQTIFIGNIPLMNSLGTSIINGIYRIVINQILQNPGVYYRSELDHNGISVYTSTIISDWGGRLELEIDRKARIWARVSRKQKISILVLLSAMGSNLREILDNVCYPEIFLSFPNDKEKKKIGSKENAILEFYQQFACVGGDPVFSESLCKELQKKFFQQRCELGRIGRRNTNQRLNLDIPQKNTFLLPRDVLAAADHLIRMKFGMGTLDDMNHLKNKRIRSVADLLQDQFGLALVRLENGVRGTICGAIRHKLIPNPKNLVTSTSFTTTYESFFGLHPLSQVLDRTNPLTQIAHGRRLSYLGPGGLTGRTASFRIRDIHPSHYGRICPIDTSEGINVGLIGSLAIHVRIGHWGSIESPFYEISERSKKAQMIYLSPSRDEYYMVAAGNSLALNRGIQEEQVVPARYRQEFLTIAWEQIHLRSIFPFQYFSIGASLIPFIEHNDANRALMSSNMQRQAVPLSRSEKCIVGTGLERQTALDSGVSAIAEREGKIIYTDTHKIIFSSNGDTMSIPLVMYQRSNKNTCMHQKPQVPRGKCIKKGQILADGATTVGGELALGKNVLVAHMPWEGYNSEDAVLISERLVYEDIYTSFYIRKYEIQTHVTSQGPERITKEIPHLEDHLLRNLDRNGIVMLGSWIETGDILVGKLTPQTATESSYAPEDRLLRAILGIQVSTAKETSLKLSIGGRGRVIDVRWIQKRGGSIYNPEMIRVYISQKREIKVGDKVAGRHGNKGIISKILPRQDMPYLQDGTPVDMVFNPLGVPSRMNVGQIFECSLGLAGDLLKRHYRIAPFDERYEQEASRKLVFSELYSASKQTKNPWVFEPEYPGKSRIFDGRTGDPFEQPVLIGKPYILKLIHQVDDKIHGRSSGHYALVTQQPLRGRAKQGGQRVGEMEVWALEGFGVAHILQEMLTYKSDHIRARQEVLGATIVGGTVPNPEDAPESFRLLVRELRSLALELNHFLVSEKNFQINRKEA.

It belongs to the RNA polymerase beta chain family. In plastids the minimal PEP RNA polymerase catalytic core is composed of four subunits: alpha, beta, beta', and beta''. When a (nuclear-encoded) sigma factor is associated with the core the holoenzyme is formed, which can initiate transcription.

It localises to the plastid. Its subcellular location is the chloroplast. It carries out the reaction RNA(n) + a ribonucleoside 5'-triphosphate = RNA(n+1) + diphosphate. DNA-dependent RNA polymerase catalyzes the transcription of DNA into RNA using the four ribonucleoside triphosphates as substrates. The sequence is that of DNA-directed RNA polymerase subunit beta from Dioscorea elephantipes (Elephant's foot yam).